A 117-amino-acid chain; its full sequence is Ribosome-binding factor A (117 aa).

The protein belongs to the RbfA family. In terms of assembly, monomer. Binds 30S ribosomal subunits, but not 50S ribosomal subunits or 70S ribosomes.

The protein localises to the cytoplasm. Its function is as follows. One of several proteins that assist in the late maturation steps of the functional core of the 30S ribosomal subunit. Associates with free 30S ribosomal subunits (but not with 30S subunits that are part of 70S ribosomes or polysomes). Required for efficient processing of 16S rRNA. May interact with the 5'-terminal helix region of 16S rRNA. In Leptospira interrogans serogroup Icterohaemorrhagiae serovar copenhageni (strain Fiocruz L1-130), this protein is Ribosome-binding factor A.